The primary structure comprises 225 residues: 7-carboxy-7-deazaguanine synthase (225 aa).

Substrate-binding positions include 14–16 and arginine 29; that span reads LQG. One can recognise a Radical SAM core domain in the interval 20 to 225; sequence HFGKSAFFIR…LQTHKWLGVL (206 aa). Positions 33, 37, and 40 each coordinate [4Fe-4S] cluster. Threonine 42 contacts Mg(2+). Substrate is bound at residue threonine 77. S-adenosyl-L-methionine-binding positions include glycine 79 and 127–129; that span reads SPK.

It belongs to the radical SAM superfamily. 7-carboxy-7-deazaguanine synthase family. As to quaternary structure, homodimer. [4Fe-4S] cluster is required as a cofactor. It depends on S-adenosyl-L-methionine as a cofactor. Mg(2+) serves as cofactor.

It carries out the reaction 6-carboxy-5,6,7,8-tetrahydropterin + H(+) = 7-carboxy-7-deazaguanine + NH4(+). It participates in purine metabolism; 7-cyano-7-deazaguanine biosynthesis. Its function is as follows. Catalyzes the complex heterocyclic radical-mediated conversion of 6-carboxy-5,6,7,8-tetrahydropterin (CPH4) to 7-carboxy-7-deazaguanine (CDG), a step common to the biosynthetic pathways of all 7-deazapurine-containing compounds. The protein is 7-carboxy-7-deazaguanine synthase of Prochlorococcus marinus (strain SARG / CCMP1375 / SS120).